The chain runs to 449 residues: 23S rRNA (uracil(1939)-C(5))-methyltransferase RlmD (449 aa).

Positions 15 to 73 constitute a TRAM domain; that stretch reads KAIPAKNLTVTVTSLDPFGQGVARHEGKTVFVTGVLPGEQAEVQLTEDKRQFSHAKLKR. The [4Fe-4S] cluster site is built by Cys86, Cys92, Cys95, and Cys173. Residues Gln276, Phe305, Asn310, Glu326, Asn353, and Asp374 each coordinate S-adenosyl-L-methionine. The active-site Nucleophile is Cys400.

It belongs to the class I-like SAM-binding methyltransferase superfamily. RNA M5U methyltransferase family. RlmD subfamily.

The catalysed reaction is uridine(1939) in 23S rRNA + S-adenosyl-L-methionine = 5-methyluridine(1939) in 23S rRNA + S-adenosyl-L-homocysteine + H(+). Catalyzes the formation of 5-methyl-uridine at position 1939 (m5U1939) in 23S rRNA. This is 23S rRNA (uracil(1939)-C(5))-methyltransferase RlmD from Pectobacterium carotovorum subsp. carotovorum (strain PC1).